The primary structure comprises 438 residues: Adenosylhomocysteinase (438 aa).

Residues Thr-64, Asp-139, and Glu-164 each coordinate substrate. Residue 165-167 (TTT) coordinates NAD(+). Substrate-binding residues include Lys-194 and Asp-198. NAD(+)-binding positions include Asn-199, 228-233 (GYGDVG), Glu-251, Asn-286, 307-309 (IGH), and Asn-352.

This sequence belongs to the adenosylhomocysteinase family. NAD(+) serves as cofactor.

The protein resides in the cytoplasm. The enzyme catalyses S-adenosyl-L-homocysteine + H2O = L-homocysteine + adenosine. Its pathway is amino-acid biosynthesis; L-homocysteine biosynthesis; L-homocysteine from S-adenosyl-L-homocysteine: step 1/1. May play a key role in the regulation of the intracellular concentration of adenosylhomocysteine. The protein is Adenosylhomocysteinase of Coxiella burnetii (strain RSA 493 / Nine Mile phase I).